Consider the following 360-residue polypeptide: Peptide chain release factor 1 (360 aa).

Position 237 is an N5-methylglutamine (Q237).

Belongs to the prokaryotic/mitochondrial release factor family. Post-translationally, methylated by PrmC. Methylation increases the termination efficiency of RF1.

It localises to the cytoplasm. Functionally, peptide chain release factor 1 directs the termination of translation in response to the peptide chain termination codons UAG and UAA. In Pseudomonas putida (strain GB-1), this protein is Peptide chain release factor 1.